The chain runs to 435 residues: GTPase Obg (435 aa).

Residues 6–164 enclose the Obg domain; the sequence is ADFVDRVKIF…RWLELELKIL (159 aa). An OBG-type G domain is found at 165-335; it reads ADVGLVGYPN…LVSKLASIVR (171 aa). GTP-binding positions include 171–178, 196–200, 217–220, 287–290, and 316–318; these read GYPNVGKS, FTTLI, DIPG, NKID, and SAV. Ser178 and Thr198 together coordinate Mg(2+). Residues 357 to 435 form the OCT domain; it reads RRLPEKFHLE…IGDFEFEYRE (79 aa).

It belongs to the TRAFAC class OBG-HflX-like GTPase superfamily. OBG GTPase family. In terms of assembly, monomer. Mg(2+) is required as a cofactor.

The protein resides in the cytoplasm. In terms of biological role, an essential GTPase which binds GTP, GDP and possibly (p)ppGpp with moderate affinity, with high nucleotide exchange rates and a fairly low GTP hydrolysis rate. Plays a role in control of the cell cycle, stress response, ribosome biogenesis and in those bacteria that undergo differentiation, in morphogenesis control. This chain is GTPase Obg, found in Thermotoga maritima (strain ATCC 43589 / DSM 3109 / JCM 10099 / NBRC 100826 / MSB8).